The sequence spans 417 residues: Tyrosine--tRNA ligase (417 aa).

Y39 is an L-tyrosine binding site. Positions 44 to 53 match the 'HIGH' region motif; it reads CTARSLHIGN. Y176 and Q180 together coordinate L-tyrosine. The 'KMSKS' region motif lies at 236–240; that stretch reads KMGKT. K239 provides a ligand contact to ATP. The 68-residue stretch at 350 to 417 folds into the S4 RNA-binding domain; the sequence is FGVLNAFVKA…KKKHILIKPA (68 aa).

Belongs to the class-I aminoacyl-tRNA synthetase family. TyrS type 1 subfamily. As to quaternary structure, homodimer.

The protein localises to the cytoplasm. The enzyme catalyses tRNA(Tyr) + L-tyrosine + ATP = L-tyrosyl-tRNA(Tyr) + AMP + diphosphate + H(+). Catalyzes the attachment of tyrosine to tRNA(Tyr) in a two-step reaction: tyrosine is first activated by ATP to form Tyr-AMP and then transferred to the acceptor end of tRNA(Tyr). This chain is Tyrosine--tRNA ligase, found in Bradyrhizobium diazoefficiens (strain JCM 10833 / BCRC 13528 / IAM 13628 / NBRC 14792 / USDA 110).